Here is a 299-residue protein sequence, read N- to C-terminus: Spermatocyte protein spe-11 (299 aa).

The segment at 1 to 38 (MSDEEIDISTALNNKTTPKKKSLKRNSNSQEGYESPEE) is disordered.

Expressed in mature sperm.

The protein localises to the cytoplasm. Its subcellular location is the perinuclear region. Functionally, paternally sperm-supplied factor required for embryogenesis. Plays a role in preventing polyspermy possibly by promoting the formation of a continuous and cohesive eggshell chitin layer. The protein is Spermatocyte protein spe-11 (spe-11) of Caenorhabditis elegans.